The following is an 87-amino-acid chain: RNA-binding protein Hfq (87 aa).

A Sm domain is found at 9 to 68; the sequence is DPYLNVLRKERIPVSIYLVNGIKLQGQVESFDQFVVLLKNTVSQMVYKHAISTVVPSRPV.

Belongs to the Hfq family. In terms of assembly, homohexamer.

Functionally, RNA chaperone that binds small regulatory RNA (sRNAs) and mRNAs to facilitate mRNA translational regulation in response to envelope stress, environmental stress and changes in metabolite concentrations. Also binds with high specificity to tRNAs. The polypeptide is RNA-binding protein Hfq (Teredinibacter turnerae (strain ATCC 39867 / T7901)).